The chain runs to 532 residues: Bifunctional purine biosynthesis protein PurH (532 aa).

The 147-residue stretch at 1-147 (MAKIKRALIS…KNYRSVTVVT (147 aa)) folds into the MGS-like domain.

It belongs to the PurH family.

The catalysed reaction is (6R)-10-formyltetrahydrofolate + 5-amino-1-(5-phospho-beta-D-ribosyl)imidazole-4-carboxamide = 5-formamido-1-(5-phospho-D-ribosyl)imidazole-4-carboxamide + (6S)-5,6,7,8-tetrahydrofolate. It carries out the reaction IMP + H2O = 5-formamido-1-(5-phospho-D-ribosyl)imidazole-4-carboxamide. The protein operates within purine metabolism; IMP biosynthesis via de novo pathway; 5-formamido-1-(5-phospho-D-ribosyl)imidazole-4-carboxamide from 5-amino-1-(5-phospho-D-ribosyl)imidazole-4-carboxamide (10-formyl THF route): step 1/1. It participates in purine metabolism; IMP biosynthesis via de novo pathway; IMP from 5-formamido-1-(5-phospho-D-ribosyl)imidazole-4-carboxamide: step 1/1. The polypeptide is Bifunctional purine biosynthesis protein PurH (Magnetococcus marinus (strain ATCC BAA-1437 / JCM 17883 / MC-1)).